We begin with the raw amino-acid sequence, 495 residues long: MTGRCPTVAVVGAGMSGMCVAITLLSAGITDVCIYEKADDVGGTWRDNTYPGLTCDVPSRLYQYSFAKNPNWTQMFSRGGEIQDYLRGIAERYGLRHRIRFGATVVSARFDDGRWVLRTDSGTESTVDFLISATGVLHHPRIPPIAGLDDFRGTVFHSARWDHTVPLLGRRIAVIGTGSTGVQLVCGLAGVAGKVTMFQRTAQWVLPWPNPRYSKLARVFHRAFPCLGSLAYKAYSLSFETFAVALSNPGLHRKLVGAVCRASLRRVRDPRLRRALTPDYEPMCKRLVMSGGFYRAIQRDDVELVTAGIDHVEHRGIVTDDGVLHEVDVIVLATGFDSHAFFRPMQLTGRDGIRIDDVWQDGPHAHQTVAIPGFPNFFMMLGPHSPVGNFPLTAVAESQAEHIVQWIKRWRHGEFDTMEPKSAATEAYNTVLRAAMPNTVWTTGCDSWYLNKDGIPEVWPFAPAKHRAMLANLHPEEYDLRRYAAVRATSRPQSA.

FAD-binding residues include serine 16, glutamate 36, tryptophan 45, aspartate 56, tyrosine 62, and valine 105.

This sequence belongs to the FAD-binding monooxygenase family. FAD is required as a cofactor.

This is an uncharacterized protein from Mycobacterium tuberculosis (strain CDC 1551 / Oshkosh).